Reading from the N-terminus, the 278-residue chain is Octanoyltransferase LipM (278 aa).

A BPL/LPL catalytic domain is found at 33–248 (KKMPPTIRFY…GFEKGLDVEL (216 aa)). Residue C150 is the Acyl-thioester intermediate of the active site.

Belongs to the octanoyltransferase LipM family. As to quaternary structure, monomer.

It catalyses the reaction octanoyl-[ACP] + L-lysyl-[protein] = N(6)-octanoyl-L-lysyl-[protein] + holo-[ACP] + H(+). The protein operates within protein modification; protein lipoylation via endogenous pathway; protein N(6)-(lipoyl)lysine from octanoyl-[acyl-carrier-protein]. Its function is as follows. Catalyzes the transfer of endogenously produced octanoic acid from octanoyl-acyl-carrier-protein onto the lipoyl domain of GcvH, an intermediate carrier during protein lipoylation. This Bacillus anthracis protein is Octanoyltransferase LipM.